Reading from the N-terminus, the 343-residue chain is Putative KilA-N domain-containing protein R904 (343 aa).

Positions 51-157 (EFSWGNYLNL…IKASVIINDY (107 aa)) constitute a KilA-N domain. The stretch at 159–279 (AKQMFKEHEK…NAVKEYKELY (121 aa)) forms a coiled coil.

This is Putative KilA-N domain-containing protein R904 from Acanthamoeba polyphaga mimivirus (APMV).